The following is a 480-amino-acid chain: Argininosuccinate lyase (480 aa).

The span at 1 to 17 (MTDTTPSADLGASSQQP) shows a compositional bias: polar residues. The interval 1–24 (MTDTTPSADLGASSQQPAKAWSGR) is disordered.

This sequence belongs to the lyase 1 family. Argininosuccinate lyase subfamily.

It is found in the cytoplasm. It catalyses the reaction 2-(N(omega)-L-arginino)succinate = fumarate + L-arginine. The protein operates within amino-acid biosynthesis; L-arginine biosynthesis; L-arginine from L-ornithine and carbamoyl phosphate: step 3/3. This chain is Argininosuccinate lyase, found in Azoarcus sp. (strain BH72).